A 223-amino-acid chain; its full sequence is Putative 3-methyladenine DNA glycosylase (223 aa).

This sequence belongs to the DNA glycosylase MPG family.

The protein is Putative 3-methyladenine DNA glycosylase of Pseudomonas savastanoi pv. phaseolicola (strain 1448A / Race 6) (Pseudomonas syringae pv. phaseolicola (strain 1448A / Race 6)).